A 323-amino-acid polypeptide reads, in one-letter code: tRNA U34 carboxymethyltransferase (323 aa).

Carboxy-S-adenosyl-L-methionine contacts are provided by residues Lys91, Trp105, Lys110, Gly130, 152 to 154 (DPT), 181 to 182 (IE), Met196, Tyr200, and Arg315.

It belongs to the class I-like SAM-binding methyltransferase superfamily. CmoB family. As to quaternary structure, homotetramer.

It catalyses the reaction carboxy-S-adenosyl-L-methionine + 5-hydroxyuridine(34) in tRNA = 5-carboxymethoxyuridine(34) in tRNA + S-adenosyl-L-homocysteine + H(+). Its function is as follows. Catalyzes carboxymethyl transfer from carboxy-S-adenosyl-L-methionine (Cx-SAM) to 5-hydroxyuridine (ho5U) to form 5-carboxymethoxyuridine (cmo5U) at position 34 in tRNAs. The chain is tRNA U34 carboxymethyltransferase from Photorhabdus laumondii subsp. laumondii (strain DSM 15139 / CIP 105565 / TT01) (Photorhabdus luminescens subsp. laumondii).